A 1071-amino-acid polypeptide reads, in one-letter code: Carbamoyl phosphate synthase large chain (1071 aa).

Residues 1-403 (MPKRTDLKSI…SFQKALRGLE (403 aa)) are carboxyphosphate synthetic domain. ATP is bound by residues Arg129, Arg169, Gly175, Gly176, Gln208, Val210, Glu215, Gly241, Val242, His243, Gln285, and Glu299. An ATP-grasp 1 domain is found at 133 to 328 (KEAMEKIGLS…IAKVAAKLAV (196 aa)). Residues Gln285, Glu299, and Asn301 each contribute to the Mg(2+) site. Gln285, Glu299, and Asn301 together coordinate Mn(2+). Positions 404–548 (TGLCGFNPRS…YSTYEEECES (145 aa)) are oligomerization domain. The interval 549 to 930 (RPSDRKKVMI…AYYKAQLGAG (382 aa)) is carbamoyl phosphate synthetic domain. One can recognise an ATP-grasp 2 domain in the interval 673-864 (QKVLNDLGLR…LAKVGARCMA (192 aa)). Arg709, Phe748, Leu750, Glu755, Gly780, Ile781, His782, Ser783, Gln823, and Glu835 together coordinate ATP. Mg(2+) is bound by residues Gln823, Glu835, and Asn837. Mn(2+) contacts are provided by Gln823, Glu835, and Asn837. The MGS-like domain occupies 931–1071 (ERLNPTGKIF…ELHGRLKNRN (141 aa)). Residues 931-1071 (ERLNPTGKIF…ELHGRLKNRN (141 aa)) are allosteric domain.

Belongs to the CarB family. In terms of assembly, composed of two chains; the small (or glutamine) chain promotes the hydrolysis of glutamine to ammonia, which is used by the large (or ammonia) chain to synthesize carbamoyl phosphate. Tetramer of heterodimers (alpha,beta)4. The cofactor is Mg(2+). Mn(2+) is required as a cofactor.

It carries out the reaction hydrogencarbonate + L-glutamine + 2 ATP + H2O = carbamoyl phosphate + L-glutamate + 2 ADP + phosphate + 2 H(+). The catalysed reaction is hydrogencarbonate + NH4(+) + 2 ATP = carbamoyl phosphate + 2 ADP + phosphate + 2 H(+). It participates in amino-acid biosynthesis; L-arginine biosynthesis; carbamoyl phosphate from bicarbonate: step 1/1. The protein operates within pyrimidine metabolism; UMP biosynthesis via de novo pathway; (S)-dihydroorotate from bicarbonate: step 1/3. In terms of biological role, large subunit of the glutamine-dependent carbamoyl phosphate synthetase (CPSase). CPSase catalyzes the formation of carbamoyl phosphate from the ammonia moiety of glutamine, carbonate, and phosphate donated by ATP, constituting the first step of 2 biosynthetic pathways, one leading to arginine and/or urea and the other to pyrimidine nucleotides. The large subunit (synthetase) binds the substrates ammonia (free or transferred from glutamine from the small subunit), hydrogencarbonate and ATP and carries out an ATP-coupled ligase reaction, activating hydrogencarbonate by forming carboxy phosphate which reacts with ammonia to form carbamoyl phosphate. The polypeptide is Carbamoyl phosphate synthase large chain (Neisseria meningitidis serogroup B (strain ATCC BAA-335 / MC58)).